The sequence spans 96 residues: Small ribosomal subunit protein bS6 (96 aa).

It belongs to the bacterial ribosomal protein bS6 family.

Its function is as follows. Binds together with bS18 to 16S ribosomal RNA. This Streptococcus pyogenes serotype M1 protein is Small ribosomal subunit protein bS6.